A 403-amino-acid chain; its full sequence is Flavohemoprotein (403 aa).

One can recognise a Globin domain in the interval 1–138; it reads MLTQKTKDIV…LADVLMGMES (138 aa). His85 provides a ligand contact to heme b. Catalysis depends on charge relay system residues Tyr95 and Glu137. The tract at residues 149 to 403 is reductase; that stretch reads GGWKGWRTFV…EVFGPDLFAE (255 aa). The 111-residue stretch at 152 to 262 folds into the FAD-binding FR-type domain; that stretch reads KGWRTFVIRE…AAPYGSFHID (111 aa). Residues Tyr190 and 206 to 209 each bind FAD; that span reads RQYS. NADP(+) is bound at residue 275–280; that stretch reads GVGLTP. 395–398 serves as a coordination point for FAD; it reads VFGP.

The protein belongs to the globin family. Two-domain flavohemoproteins subfamily. In the C-terminal section; belongs to the flavoprotein pyridine nucleotide cytochrome reductase family. In terms of assembly, monomer. It depends on FAD as a cofactor. Heme b serves as cofactor.

Its subcellular location is the cytoplasm. The enzyme catalyses 2 nitric oxide + NADPH + 2 O2 = 2 nitrate + NADP(+) + H(+). The catalysed reaction is 2 nitric oxide + NADH + 2 O2 = 2 nitrate + NAD(+) + H(+). Is involved in NO detoxification in an aerobic process, termed nitric oxide dioxygenase (NOD) reaction that utilizes O(2) and NAD(P)H to convert NO to nitrate, which protects the bacterium from various noxious nitrogen compounds. Therefore, plays a central role in the inducible response to nitrosative stress. Functionally, in the presence of oxygen and NADH, FHP has NADH oxidase activity, which leads to the generation of superoxide and H(2)O(2), both in vitro and in vivo, and it has been suggested that FHP might act as an amplifier of superoxide stress. Under anaerobic conditions, FHP also exhibits nitric oxide reductase and FAD reductase activities. However, all these reactions are much lower than NOD activity. The polypeptide is Flavohemoprotein (hmp) (Cupriavidus necator (strain ATCC 17699 / DSM 428 / KCTC 22496 / NCIMB 10442 / H16 / Stanier 337) (Ralstonia eutropha)).